The chain runs to 532 residues: Glycerophosphocholine permease GIT4 (532 aa).

6 consecutive transmembrane segments (helical) span residues 55-75, 98-118, 126-146, 150-170, 201-221, and 229-249; these read LWPA…NAGI, NIGS…GYIS, GMLT…VASW, VQGF…AIGA, AMID…LWIF, and VWRL…FIRL. N-linked (GlcNAc...) asparagine glycosylation is present at N266. Residues 272 to 292 traverse the membrane as a helical segment; the sequence is WWLIIKFYWFRLTVVSLIWFI. N314 is a glycosylation site (N-linked (GlcNAc...) asparagine). Transmembrane regions (helical) follow at residues 321–341, 349–369, and 375–395; these read WGWS…GAFI, LTLA…SACL, and HVAG…FGPG. N396 carries an N-linked (GlcNAc...) asparagine glycan. Helical transmembrane passes span 416–436 and 450–470; these read GIAA…FPAI and VPFY…IFFV.

This sequence belongs to the major facilitator superfamily. Sugar transporter (TC 2.A.1.1) family.

The protein localises to the cell membrane. It carries out the reaction sn-glycerol 3-phosphocholine(out) = sn-glycerol 3-phosphocholine(in). Its function is as follows. Glycerophosphodiester transporter that mediates uptake of glycerophosphocholine (GroPCho) with GIT3. Does not possess detectable glycerophosphoinositol (GroPIns) transport activity. The expanded ability to utilize GroPIns and GroPCho results from the organism's pathogenic nature and its need to occupy a variety of environments within its host organism. This possibility is buttressed by the fact that GroPIns and GroPCho are present and abundant in human fluids. The polypeptide is Glycerophosphocholine permease GIT4 (Candida albicans (strain SC5314 / ATCC MYA-2876) (Yeast)).